Consider the following 117-residue polypeptide: UPF0344 protein GTNG_0604 (117 aa).

The next 4 membrane-spanning stretches (helical) occupy residues 1–21 (MTHA…IAVS), 39–59 (LFYI…ASIS), 61–81 (LYWL…MVLV), and 97–117 (VIAL…FDLF).

This sequence belongs to the UPF0344 family.

The protein resides in the cell membrane. The protein is UPF0344 protein GTNG_0604 of Geobacillus thermodenitrificans (strain NG80-2).